We begin with the raw amino-acid sequence, 1353 residues long: MFLILLISLPTAFAVIGDLKCTSDNINDKDTGPPPISTDTVDVTNGLGTYYVLDRVYLNTTLFLNGYYPTSGSTYRNMALKGSVLLSRLWFKPPFLSDFINGIFAKVKNTKVIKDRVMYSEFPAITIGSTFVNTSYSVVVQPRTINSTQDGDNKLQGLLEVSVCQYNMCEYPQTICHPNLGNHRKELWHLDTGVVSCLYKRNFTYDVNADYLYFHFYQEGGTFYAYFTDTGVVTKFLFNVYLGMALSHYYVMPLTCNSKLTLEYWVTPLTSRQYLLAFNQDGIIFNAEDCMSDFMSEIKCKTQSIAPPTGVYELNGYTVQPIADVYRRKPNLPNCNIEAWLNDKSVPSPLNWERKTFSNCNFNMSSLMSFIQADSFTCNNIDAAKIYGMCFSSITIDKFAIPNGRKVDLQLGNLGYLQSFNYRIDTTATSCQLYYNLPAANVSVSRFNPSTWNKRFGFIEDSVFKPRPAGVLTNHDVVYAQHCFKAPKNFCPCKLNGSCVGSGPGKNNGIGTCPAGTNYLTCDNLCTPDPITFTGTYKCPQTKSLVGIGEHCSGLAVKSDYCGGNSCTCRPQAFLGWSADSCLQGDKCNIFANFILHDVNSGLTCSTDLQKANTDIILGVCVNYDLYGILGQGIFVEVNATYYNSWQNLLYDSNGNLYGFRDYIINRTFMIRSCYSGRVSAAFHANSSEPALLFRNIKCNYVFNNSLTRQLQPINYFDSYLGCVVNAYNSTAISVQTCDLTVGSGYCVDYSKNRRSRGAITTGYRFTNFEPFTVNSVNDSLEPVGGLYEIQIPSEFTIGNMVEFIQTSSPKVTIDCAAFVCGDYAACKSQLVEYGSFCDNINAILTEVNELLDTTQLQVANSLMNGVTLSTKLKDGVNFNVDDINFSPVLGCLGSECSKASSRSAIEDLLFDKVKLSDVGFVEAYNNCTGGAEIRDLICVQSYKGIKVLPPLLSENQISGYTLAATSASLFPPWTAAAGVPFYLNVQYRINGLGVTMDVLSQNQKLIANAFNNALYAIQEGFDATNSALVKIQAVVNANAEALNNLLQQLSNRFGAISASLQEILSRLDALEAEAQIDRLINGRLTALNAYVSQQLSDSTLVKFSAAQAMEKVNECVKSQSSRINFCGNGNHIISLVQNAPYGLYFIHFSYVPTKYVTARVSPGLCIAGDRGIAPKSGYFVNVNNTWMYTGSGYYYPEPITENNVVVMSTCAVNYTKAPYVMLNTSIPNLPDFKEELDQWFKNQTSVAPDLSLDYINVTFLDLQVEMNRLQEAIKVLNQSYINLKDIGTYEYYVKWPWYVWLLICLAGVAMLVLLFFICCCTGCGTSCFKKCGGCCDDYTGYQELVIKTSHDD.

The first 13 residues, 1–13, serve as a signal peptide directing secretion; it reads MFLILLISLPTAF. Residues 14 to 1297 are Extracellular-facing; sequence AVIGDLKCTS…GTYEYYVKWP (1284 aa). The region spanning 15–302 is the BetaCoV S1-NTD domain; sequence VIGDLKCTSD…DFMSEIKCKT (288 aa). 5 cysteine pairs are disulfide-bonded: C21-C169, C164-C197, C176-C256, C290-C300, and C335-C360. N-linked (GlcNAc...) asparagine; by host glycosylation is found at N59, N133, and N146. N202 is a glycosylation site (N-linked (GlcNAc...) asparagine; by host). Positions 333 to 607 constitute a BetaCoV S1-CTD domain; that stretch reads PNCNIEAWLN…DVNSGLTCST (275 aa). N363 is a glycosylation site (N-linked (GlcNAc...) asparagine; by host). Intrachain disulfides connect C378–C431 and C390–C605. N-linked (GlcNAc...) asparagine; by host glycans are attached at residues N441, N496, N639, N666, N686, N704, N729, and N778. 2 fusion peptide regions span residues 904–925 and 923–943; these read SAIE…VEAY and EAYN…VQSY. An N-linked (GlcNAc...) asparagine; by host glycan is attached at N927. C928 and C939 are joined by a disulfide. The heptad repeat 1 stretch occupies residues 1004–1054; that stretch reads QKLIANAFNNALYAIQEGFDATNSALVKIQAVVNANAEALNNLLQQLSNRF. Residues 1033-1077 adopt a coiled-coil conformation; it reads QAVVNANAEALNNLLQQLSNRFGAISASLQEILSRLDALEAEAQI. N1184, N1214, N1224, N1243, N1257, and N1278 each carry an N-linked (GlcNAc...) asparagine; by host glycan. The tract at residues 1248 to 1286 is heptad repeat 2; the sequence is APDLSLDYINVTFLDLQVEMNRLQEAIKVLNQSYINLKD. Positions 1259–1287 form a coiled coil; sequence TFLDLQVEMNRLQEAIKVLNQSYINLKDI. Residues 1298-1318 form a helical membrane-spanning segment; the sequence is WYVWLLICLAGVAMLVLLFFI. Over 1319–1353 the chain is Cytoplasmic; sequence CCCTGCGTSCFKKCGGCCDDYTGYQELVIKTSHDD. The KxHxx motif lies at 1349 to 1353; the sequence is TSHDD.

This sequence belongs to the betacoronaviruses spike protein family. Homotrimer; each monomer consists of a S1 and a S2 subunit. The resulting peplomers protrude from the virus surface as spikes. In terms of processing, specific enzymatic cleavages in vivo yield mature proteins. The precursor is processed into S1 and S2 by host cell furin or another cellular protease to yield the mature S1 and S2 proteins. Additionally, a second cleavage leads to the release of a fusion peptide after viral attachment to host cell receptor. The cytoplasmic Cys-rich domain is palmitoylated. Spike glycoprotein is digested within host endosomes.

It is found in the virion membrane. The protein localises to the host endoplasmic reticulum-Golgi intermediate compartment membrane. Its subcellular location is the host cell membrane. S1 attaches the virion to the cell membrane by interacting with sialic acid-containing cell receptors, initiating the infection. In terms of biological role, attaches the virion to the cell membrane by interacting with host receptor, initiating the infection. Functionally, mediates fusion of the virion and cellular membranes by acting as a class I viral fusion protein. Under the current model, the protein has at least three conformational states: pre-fusion native state, pre-hairpin intermediate state, and post-fusion hairpin state. During viral and target cell membrane fusion, the coiled coil regions (heptad repeats) assume a trimer-of-hairpins structure, positioning the fusion peptide in close proximity to the C-terminal region of the ectodomain. The formation of this structure appears to drive apposition and subsequent fusion of viral and target cell membranes. Its function is as follows. Acts as a viral fusion peptide which is unmasked following S2 cleavage occurring upon virus endocytosis. This chain is Spike glycoprotein, found in Homo sapiens (Human).